The chain runs to 110 residues: UPF0060 membrane protein Rpal_4363 (110 aa).

The next 4 helical transmembrane spans lie at 4 to 24 (LLTFCAAALMEITGCFAFWAW), 31 to 51 (PLWLIPGMLALALFAYLLTLA), 59 to 79 (AYAAYGGIYIASALLWGWAIE), and 88 to 108 (VIGAAICLVGMSVILFGPRAL).

This sequence belongs to the UPF0060 family.

It localises to the cell inner membrane. This is UPF0060 membrane protein Rpal_4363 from Rhodopseudomonas palustris (strain TIE-1).